A 282-amino-acid polypeptide reads, in one-letter code: D-alanine aminotransferase (282 aa).

Y32 is a substrate binding site. Pyridoxal 5'-phosphate is bound at residue R51. 2 residues coordinate substrate: R99 and H101. K146 functions as the Proton acceptor in the catalytic mechanism. At K146 the chain carries N6-(pyridoxal phosphate)lysine. Position 178 (E178) interacts with pyridoxal 5'-phosphate.

Belongs to the class-IV pyridoxal-phosphate-dependent aminotransferase family. Homodimer. The cofactor is pyridoxal 5'-phosphate.

It catalyses the reaction D-alanine + 2-oxoglutarate = D-glutamate + pyruvate. Functionally, acts on the D-isomers of alanine, leucine, aspartate, glutamate, aminobutyrate, norvaline and asparagine. The enzyme transfers an amino group from a substrate D-amino acid to the pyridoxal phosphate cofactor to form pyridoxamine and an alpha-keto acid in the first half-reaction. The second half-reaction is the reverse of the first, transferring the amino group from the pyridoxamine to a second alpha-keto acid to form the product D-amino acid via a ping-pong mechanism. This is an important process in the formation of D-alanine and D-glutamate, which are essential bacterial cell wall components. This Staphylococcus aureus (strain N315) protein is D-alanine aminotransferase (dat).